Reading from the N-terminus, the 501-residue chain is Cytochrome P450 monooxygeanse terP (501 aa).

Residues 2–22 form a helical membrane-spanning segment; that stretch reads PSLLLSLLLLQVPIICAWLLV. Residue C441 participates in heme binding.

This sequence belongs to the cytochrome P450 family. It depends on heme as a cofactor.

Its subcellular location is the membrane. It participates in secondary metabolite biosynthesis. Cytochrome P450 monooxygeanse; part of the gene cluster that mediates the biosynthesis of terpendoles, indole-diterpene (IDT) mycotoxins including terpendole I, terpendole K, terpendole C, as well as the kinesin Eg5 inhibitor terpendole E. TerP has dual activity and is able to convert terpendole E to 13-desoxyterpendole I and paspaline to 13-desoxypaxilline. Terpendoles biosynthesis begins with the synthesis of geranylgeranyl diphosphate (GGPP) by a yet unidentified GGPP synthase. Condensation of indole-3-glycerol phosphate with GGPP by the prenyltransferase terC then forms 3-geranylgeranylindole (3-GGI), followed by epoxidation and cyclization of this intermediate (by the FAD-dependent monooxygeanse terM and the terpene cyclase terB) to form paspaline. The cytochrome monooxygenase terQ then hydroxylates paspalline at C-11 to yield terpendole E. The cytochrome monooxygenase terP converts terpendole E to 13-desoxyterpendole I, and terQ converts 13-desoxyterpendole I into terpendole I. TerF and terK are required for conversion of terpendole I to terpendole C which is further converted to terpendole K. This Tolypocladium album (Soil fungus) protein is Cytochrome P450 monooxygeanse terP.